A 332-amino-acid polypeptide reads, in one-letter code: L-lactate dehydrogenase A chain (332 aa).

NAD(+) is bound by residues 29 to 57 and Arg-99; that span reads GMVG…MEDK. Residues Arg-106, Asn-138, and Arg-169 each coordinate substrate. Asn-138 serves as a coordination point for NAD(+). The Proton acceptor role is filled by His-193. Position 248 (Thr-248) interacts with substrate.

It belongs to the LDH/MDH superfamily. LDH family. As to quaternary structure, homotetramer.

Its subcellular location is the cytoplasm. It catalyses the reaction (S)-lactate + NAD(+) = pyruvate + NADH + H(+). It participates in fermentation; pyruvate fermentation to lactate; (S)-lactate from pyruvate: step 1/1. In terms of biological role, interconverts simultaneously and stereospecifically pyruvate and lactate with concomitant interconversion of NADH and NAD(+). The chain is L-lactate dehydrogenase A chain (ldha) from Sphyraena argentea (Pacific barracuda).